Here is a 261-residue protein sequence, read N- to C-terminus: MQDRNFDDIAEKFSRNIYGTTKGQLRQAILWQDLDRVLAEMGPQKLRVLDAGGGEGQTAIKMAERGHQVILCDLSAQMIDRAKQAAEAKGVSDNMQFIHCAAQDVASHLETPVDLILFHAVLEWVADPRSVLQTLWSVLRPGGVLSLMFYNAHGLLMHNMVAGNFDYVQAGMPKKKKRTLSPDYPRDPTQVYLWLEEAGWQIMGKTGVRVFHDYLREKHQQRDCYEALLELETRYCRQEPYITLGRYIHVTARKPQSKDKV.

Residues Arg-26, 52–53 (GG), Asp-73, 102–103 (AQ), and His-119 each bind S-adenosyl-L-methionine.

Belongs to the class I-like SAM-binding methyltransferase superfamily. CmoM family. As to quaternary structure, homodimer.

It carries out the reaction 5-carboxymethoxyuridine(34) in tRNA + S-adenosyl-L-methionine = 5-methoxycarbonylmethoxyuridine(34) in tRNA + S-adenosyl-L-homocysteine. Functionally, catalyzes the methylation of 5-carboxymethoxyuridine (cmo5U) to form 5-methoxycarbonylmethoxyuridine (mcmo5U) at position 34 in tRNAs. This is tRNA 5-carboxymethoxyuridine methyltransferase from Escherichia coli O157:H7.